Consider the following 426-residue polypeptide: Serine--tRNA ligase (426 aa).

L-serine is bound at residue 233–235; the sequence is TAE. Residue 264 to 266 coordinates ATP; the sequence is RSE. Glu-287 is a binding site for L-serine. ATP is bound at residue 351–354; the sequence is EISS. An L-serine-binding site is contributed by Ser-387.

It belongs to the class-II aminoacyl-tRNA synthetase family. Type-1 seryl-tRNA synthetase subfamily. Homodimer. The tRNA molecule binds across the dimer.

It localises to the cytoplasm. It catalyses the reaction tRNA(Ser) + L-serine + ATP = L-seryl-tRNA(Ser) + AMP + diphosphate + H(+). The enzyme catalyses tRNA(Sec) + L-serine + ATP = L-seryl-tRNA(Sec) + AMP + diphosphate + H(+). It participates in aminoacyl-tRNA biosynthesis; selenocysteinyl-tRNA(Sec) biosynthesis; L-seryl-tRNA(Sec) from L-serine and tRNA(Sec): step 1/1. Functionally, catalyzes the attachment of serine to tRNA(Ser). Is also able to aminoacylate tRNA(Sec) with serine, to form the misacylated tRNA L-seryl-tRNA(Sec), which will be further converted into selenocysteinyl-tRNA(Sec). This chain is Serine--tRNA ligase, found in Clostridium botulinum (strain Loch Maree / Type A3).